The following is a 145-amino-acid chain: NADH-quinone oxidoreductase subunit A (145 aa).

Transmembrane regions (helical) follow at residues 14 to 34 (FAVFLIVSIGLCCLMLAGAWF), 66 to 86 (FYLVAMFFVIFDVEALYLYAW), and 96 to 116 (VGFVEAAIFILVLLAGLFYLV).

Belongs to the complex I subunit 3 family. In terms of assembly, NDH-1 is composed of 13 different subunits. Subunits NuoA, H, J, K, L, M, N constitute the membrane sector of the complex.

The protein localises to the cell inner membrane. The catalysed reaction is a quinone + NADH + 5 H(+)(in) = a quinol + NAD(+) + 4 H(+)(out). NDH-1 shuttles electrons from NADH, via FMN and iron-sulfur (Fe-S) centers, to quinones in the respiratory chain. The immediate electron acceptor for the enzyme in this species is believed to be ubiquinone. Couples the redox reaction to proton translocation (for every two electrons transferred, four hydrogen ions are translocated across the cytoplasmic membrane), and thus conserves the redox energy in a proton gradient. The protein is NADH-quinone oxidoreductase subunit A of Erwinia tasmaniensis (strain DSM 17950 / CFBP 7177 / CIP 109463 / NCPPB 4357 / Et1/99).